An 868-amino-acid chain; its full sequence is Probable mixed-linked glucan synthase 3 (868 aa).

The disordered stretch occupies residues 36 to 68 (ERKAAGGGGGGAKGKHWAAADKGERRAAKECGG). Residues 53-68 (AAADKGERRAAKECGG) are compositionally biased toward basic and acidic residues. The next 2 helical transmembrane spans lie at 86-106 (LLHP…LFFG) and 116-136 (IMWF…SWLL). D211 is an active-site residue. Substrate-binding residues include D412 and D414. D573 is a catalytic residue. 6 consecutive transmembrane segments (helical) span residues 649–669 (IYPV…MWLI), 686–706 (LLVI…WAGI), 717–737 (FFMI…VVNL), 771–791 (MLIP…VAIG), 810–830 (MGLL…LAIM), and 838–858 (IILV…YVAT).

Belongs to the glycosyltransferase 2 family. Plant cellulose synthase-like F subfamily.

It is found in the golgi apparatus membrane. Its function is as follows. May catalyze both beta-1,3 and beta-1,4 glycosidic linkage on beta-D-glucan. Essential for (1,3;1,4)-beta-D-glucans synthesis in grasses and cereals (Poaceae). The mixed-linked glucans (which are not present in walls of dicotyledons or most other monocotyledonous plants) are particularly important constituents of the walls of the starchy endosperm and aleurone cells of cereal grains such as oats, wheat, rice and barley. They can account for up to 70% by weight of the wall. The chain is Probable mixed-linked glucan synthase 3 (CSLF3) from Oryza sativa subsp. japonica (Rice).